Consider the following 250-residue polypeptide: Purine nucleoside phosphorylase BQ2027_MB2173C (250 aa).

The Zn(2+) site is built by H77, C114, and H131.

The protein belongs to the purine nucleoside phosphorylase YfiH/LACC1 family. As to quaternary structure, homodimer. It depends on Cu(2+) as a cofactor. The cofactor is Zn(2+).

The enzyme catalyses adenosine + phosphate = alpha-D-ribose 1-phosphate + adenine. It catalyses the reaction S-methyl-5'-thioadenosine + phosphate = 5-(methylsulfanyl)-alpha-D-ribose 1-phosphate + adenine. The catalysed reaction is inosine + phosphate = alpha-D-ribose 1-phosphate + hypoxanthine. It carries out the reaction adenosine + H2O + H(+) = inosine + NH4(+). Functionally, purine nucleoside enzyme that catalyzes the phosphorolysis of adenosine and inosine nucleosides, yielding D-ribose 1-phosphate and the respective free bases, adenine and hypoxanthine. Also catalyzes the phosphorolysis of S-methyl-5'-thioadenosine into adenine and S-methyl-5-thio-alpha-D-ribose 1-phosphate. Also has adenosine deaminase activity. This is Purine nucleoside phosphorylase BQ2027_MB2173C from Mycobacterium bovis (strain ATCC BAA-935 / AF2122/97).